A 205-amino-acid chain; its full sequence is MRFLAVATMVVALMVPWSVRADGVESLKAFFKSTSAMRAHFRQVVTDAQGNKVQEVEGHMQLQRPGKFRWDYNKPYVQQIVGDGEKVWLYDPDLNQLTVRPMSKAIGSSPASLLAGAQDAERNFTLTTVIRSDGLAWAQAVPKAEDSGFDKVLLGFKGDELQKMELHDSFGHVTSIQFSQLQRNPAIANSSFQFVVPAGADVVGE.

Residues methionine 1 to alanine 21 form the signal peptide.

This sequence belongs to the LolA family. Monomer.

It localises to the periplasm. Its function is as follows. Participates in the translocation of lipoproteins from the inner membrane to the outer membrane. Only forms a complex with a lipoprotein if the residue after the N-terminal Cys is not an aspartate (The Asp acts as a targeting signal to indicate that the lipoprotein should stay in the inner membrane). This Methylobacillus flagellatus (strain ATCC 51484 / DSM 6875 / VKM B-1610 / KT) protein is Outer-membrane lipoprotein carrier protein.